The sequence spans 600 residues: MPEHILVAVAWPYANGPRHIGHVAGFGVPADIFARYHRLRGNRVLMVSGTDEHGTPITLVADKEGTTPQAIADRYNKIIGDDLYNLGLSYDTFTRTTTANHYAVTQDIFRTLYERGYIIRQETLGAFSATTGRTLPDRYIEGTCPLCGYDEARGDQCDNCGSQLDPTDLINPRSKVDGQPPVFKPTEHFFLDLPAFAEQLHDWINRQDHWRPNVRNFSLNFLKDLKPRAITRDLEWGVPIPLPEYANRDDKKIYVWFDAVIGYLSASIEWAQNSGQPDAWREWWQNPDARHFYFMGKDNIVFHTVIWPAMLLGYGAGGQFGADPGGKYDGIPLQLPYNVVSSEFLTMEGKKFSSSRGIVIYVNDFLSRYDADALRYFLTIAGPENQDTDFTWAEFVRRNNDELVATWGNLVNRTLSNVYKNFGSVPQPGPLTPVDEQVLAEVTGGIETVGELLAAARFKAALAEAMRLAAQVNIYLSEQEPWKVIKSDHERAATIWYVALRCVDTLKIIFTPFLPFSSQRLHEYLGYNGYIAGPLTFREVTEANGRTHRVLTGDYDRWVGRWEPSVLPVGQVLRQPQPLFKKLDEKVIEEELARMQSRLG.

The short motif at 12–22 (PYANGPRHIGH) is the 'HIGH' region element. 4 residues coordinate Zn(2+): C144, C147, C157, and C160. The 'KMSKS' region signature appears at 351–355 (KFSSS). Position 354 (S354) interacts with ATP.

It belongs to the class-I aminoacyl-tRNA synthetase family. MetG type 1 subfamily. As to quaternary structure, monomer. The cofactor is Zn(2+).

It localises to the cytoplasm. The catalysed reaction is tRNA(Met) + L-methionine + ATP = L-methionyl-tRNA(Met) + AMP + diphosphate. Functionally, is required not only for elongation of protein synthesis but also for the initiation of all mRNA translation through initiator tRNA(fMet) aminoacylation. This chain is Methionine--tRNA ligase, found in Chloroflexus aggregans (strain MD-66 / DSM 9485).